A 289-amino-acid chain; its full sequence is MPELPEVEVVRRGLERHIVGASIDSVDILHPRAIRRHLPGAADLAGQLTGERIAGADRRGKYLWLVLEPSTVALVVHLGMSGQMLVQPPELPTEKHLRIRARLDSGLDLRFVDQRTFGGWALAPLVEVDGSLVPDSVAHIARDPLDSRFDLAATVKVVRGKHSEIKRVLLDQTVVSGIGNIYADEALWRAQIHGNRLTDRLTGPRIGAVLTAAQQVMREALSQGGTSFDALYVNVNGESGYFDRSLSAYGQEDRPCPRCGTAIRREKFMNRSSFSCPKCQRAPRRSPAR.

Residue Pro-2 is the Schiff-base intermediate with DNA of the active site. Glu-3 acts as the Proton donor in catalysis. Lys-61 acts as the Proton donor; for beta-elimination activity in catalysis. Residues His-96, Arg-115, and Lys-161 each coordinate DNA. Residues 247–281 (SAYGQEDRPCPRCGTAIRREKFMNRSSFSCPKCQR) form an FPG-type zinc finger. The active-site Proton donor; for delta-elimination activity is Arg-271.

It belongs to the FPG family. In terms of assembly, monomer. Requires Zn(2+) as cofactor.

It catalyses the reaction Hydrolysis of DNA containing ring-opened 7-methylguanine residues, releasing 2,6-diamino-4-hydroxy-5-(N-methyl)formamidopyrimidine.. It carries out the reaction 2'-deoxyribonucleotide-(2'-deoxyribose 5'-phosphate)-2'-deoxyribonucleotide-DNA = a 3'-end 2'-deoxyribonucleotide-(2,3-dehydro-2,3-deoxyribose 5'-phosphate)-DNA + a 5'-end 5'-phospho-2'-deoxyribonucleoside-DNA + H(+). Involved in base excision repair of DNA damaged by oxidation or by mutagenic agents. Acts as a DNA glycosylase that recognizes and removes damaged bases. Has a preference for oxidized purines, such as 7,8-dihydro-8-oxoguanine (8-oxoG). Has AP (apurinic/apyrimidinic) lyase activity and introduces nicks in the DNA strand. Cleaves the DNA backbone by beta-delta elimination to generate a single-strand break at the site of the removed base with both 3'- and 5'-phosphates. The chain is Formamidopyrimidine-DNA glycosylase from Rhodococcus opacus (strain B4).